The following is a 247-amino-acid chain: Eukaryotic translation initiation factor 3 subunit J (247 aa).

Disordered stretches follow at residues 1 to 64 and 77 to 101; these read MADW…KTLK and EEKRKAEEKQKLEEEDKELTPEEQM. The span at 24-45 shows a compositional bias: acidic residues; sequence EGEDEDDDIKESWDDDDEDEKK. Residues 43 to 108 adopt a coiled-coil conformation; it reads EKKEDEAKNT…EQMAEKLRRQ (66 aa).

It belongs to the eIF-3 subunit J family. As to quaternary structure, component of the eukaryotic translation initiation factor 3 (eIF-3) complex.

The protein resides in the cytoplasm. Its function is as follows. Component of the eukaryotic translation initiation factor 3 (eIF-3) complex, which is involved in protein synthesis of a specialized repertoire of mRNAs and, together with other initiation factors, stimulates binding of mRNA and methionyl-tRNAi to the 40S ribosome. The eIF-3 complex specifically targets and initiates translation of a subset of mRNAs involved in cell proliferation. The sequence is that of Eukaryotic translation initiation factor 3 subunit J from Nematostella vectensis (Starlet sea anemone).